A 374-amino-acid chain; its full sequence is Trichodiene synthase (374 aa).

Mg(2+) is bound by residues Asp100, Glu164, Asn225, Ser229, Glu233, Asp239, and Ile241. Positions 100 to 104 (DDSKD) are aspartate-rich domain.

This sequence belongs to the trichodiene synthase family. It depends on Mg(2+) as a cofactor. Mn(2+) serves as cofactor.

It carries out the reaction (2E,6E)-farnesyl diphosphate = trichodiene + diphosphate. It participates in sesquiterpene biosynthesis; trichothecene biosynthesis. With respect to regulation, benzyl triethylammonium cation (BTAC) acts as a competitive inhibitor of trichodiene synthase reaction in the presence of pyrophosphate (PPi). Its function is as follows. Trichodiene synthase; part of the core gene cluster that mediates the biosynthesis of trichothecenes, a very large family of chemically related bicyclic sesquiterpene compounds acting as mycotoxins, including T2-toxin. The biosynthesis of trichothecenes begins with the cyclization of farnesyl diphosphate to trichodiene and is catalyzed by the trichodiene synthase TRI5. Trichodiene undergoes a series of oxygenations catalyzed by the cytochrome P450 monooxygenase TRI4. TRI4 controls the addition of four oxygens at C-2, C-3, C-11, and the C-12, C-13-epoxide to form the intermediate isotrichotriol. Isotrichotriol then undergoes a non-enzymatic isomerization and cyclization to form isotrichodermol. During this process, the oxygen at the C-2 position becomes the pyran ring oxygen and the hydroxyl group at C-11 is lost. More complex type A trichothecenes are built by modifying isotrichodermol through a series of paired hydroxylation and acetylation or acylation steps. Isotrichodermol is converted to isotrichodermin by the acetyltransferase TRI101. TRI101 encodes a C-3 transacetylase that acts as a self-protection or resistance factor during biosynthesis and that the presence of a free C-3 hydroxyl group is a key component of Fusarium trichothecene phytotoxicity. A second hydroxyl group is added to C-15 by the trichothecene C-15 hydroxylase TRI11, producing 15-decalonectrin, which is then acetylated by TRI3, producing calonectrin. A third hydroxyl group is added at C-4 by the cytochrome P450 monooxygenase TRI13, converting calonectrin to 3,15-diacetoxyspirpenol, which is subsequently acetylated by the acetyltransferase TRI7. A fourth hydroxyl group is added to C-8 by the cytochrome P450 monooxygenase TRI1, followed by the addition of an isovaleryl moiety by TRI16. Finally, the acetyl group is removed from the C-3 position by the trichothecene C-3 esterase TRI8 to produce T-2 toxin. This Fusarium sporotrichioides protein is Trichodiene synthase.